The chain runs to 270 residues: Glucosamine-6-phosphate deaminase (270 aa).

The active-site Proton acceptor; for enolization step is the D72. D141 serves as the catalytic For ring-opening step. Residue H143 is the Proton acceptor; for ring-opening step of the active site. E148 serves as the catalytic For ring-opening step.

The protein belongs to the glucosamine/galactosamine-6-phosphate isomerase family. NagB subfamily. Homohexamer.

The enzyme catalyses alpha-D-glucosamine 6-phosphate + H2O = beta-D-fructose 6-phosphate + NH4(+). Its pathway is amino-sugar metabolism; N-acetylneuraminate degradation; D-fructose 6-phosphate from N-acetylneuraminate: step 5/5. Its activity is regulated as follows. Allosterically activated by N-acetylglucosamine 6-phosphate (GlcNAc6P). Its function is as follows. Catalyzes the reversible isomerization-deamination of glucosamine 6-phosphate (GlcN6P) to form fructose 6-phosphate (Fru6P) and ammonium ion. The polypeptide is Glucosamine-6-phosphate deaminase (Haemophilus influenzae (strain PittEE)).